The chain runs to 390 residues: GDSL esterase/lipase At1g28640 (390 aa).

A signal peptide spans 1 to 26; sequence MASSLEKLISSFLLVLYSTTIIVASS. Ser-42 functions as the Nucleophile in the catalytic mechanism. N-linked (GlcNAc...) asparagine glycosylation is found at Asn-105, Asn-138, and Asn-321. Catalysis depends on residues Asp-346 and His-349. Asn-364 is a glycosylation site (N-linked (GlcNAc...) asparagine).

It belongs to the 'GDSL' lipolytic enzyme family.

It is found in the secreted. This is GDSL esterase/lipase At1g28640 from Arabidopsis thaliana (Mouse-ear cress).